A 61-amino-acid polypeptide reads, in one-letter code: Short neurotoxin 1 (61 aa).

Residues 1-16 are compositionally biased toward polar residues; that stretch reads MECHNQQSSQPPTTKT. Residues 1–20 are disordered; the sequence is MECHNQQSSQPPTTKTCPGE. 4 cysteine pairs are disulfide-bonded: C3-C23, C17-C40, C42-C53, and C54-C59.

Belongs to the three-finger toxin family. Short-chain subfamily. Type I alpha-neurotoxin sub-subfamily. In terms of tissue distribution, expressed by the venom gland.

Its subcellular location is the secreted. In terms of biological role, binds to muscle nicotinic acetylcholine receptor (nAChR) and inhibit acetylcholine from binding to the receptor, thereby impairing neuromuscular transmission. The polypeptide is Short neurotoxin 1 (Naja melanoleuca (Forest cobra)).